The chain runs to 203 residues: Ras-like protein family member 10B (203 aa).

Residues 1–203 (MVSTYRVAVL…ALRRNRCAIM (203 aa)) form a small GTPase-like region. 11–18 (GARGVGKS) is a binding site for GTP. An Effector region motif is present at residues 33–42 (CVPTTARRLY). Residues 59 to 62 (DFPP) and 128 to 131 (NKRD) contribute to the GTP site. Position 200 is a cysteine methyl ester (Cys200). A lipid anchor (S-geranylgeranyl cysteine) is attached at Cys200. Residues 201-203 (AIM) constitute a propeptide, removed in mature form.

The protein belongs to the small GTPase superfamily. Ras family. In terms of assembly, interacts with CADPS. In terms of tissue distribution, expressed at high levels in skeletal muscle and, at much lower levels, in heart, brain and pancreas.

It is found in the cell membrane. It catalyses the reaction GTP + H2O = GDP + phosphate + H(+). Functionally, may facilitate the release of atrial natriuretic peptide by cardiomyocytes and hence play a role in the regulation of arterial pressure. In Homo sapiens (Human), this protein is Ras-like protein family member 10B (RASL10B).